Reading from the N-terminus, the 805-residue chain is Leucine--tRNA ligase (805 aa).

Residues 41-52 (PYPSGAGLHVGH) carry the 'HIGH' region motif. Residues 577–581 (KMSKS) carry the 'KMSKS' region motif. Lysine 580 lines the ATP pocket.

It belongs to the class-I aminoacyl-tRNA synthetase family.

The protein resides in the cytoplasm. The catalysed reaction is tRNA(Leu) + L-leucine + ATP = L-leucyl-tRNA(Leu) + AMP + diphosphate. This is Leucine--tRNA ligase from Staphylococcus aureus (strain USA300).